A 414-amino-acid chain; its full sequence is MIYVTFTPYGAFGVKDNKEVSGLEDIEYKKLFNEEEIPDIMFKLKTQPNKIADELKEEWGDEIKLETLSTEPFNIGEFLRNNLFKVGKELGYFNNYDEFRKKMHYWSTELTKKVIKSYAQQKDKIIIQVAEAISDLDKTLNLLSERLREWYSLYFPELDHLVNKHEVYANLITKLGKRKNFTKSQLKKILPSKLAGKIAEAAKNSMGGELEDYDLDVIVKFAEEINHLYEKRKELYNYLEKLMNEEAPNITKLAGVSLGARLIGLAGGLEKLAKMPASTIQVLGAEKALFAHLRMGVEPPKHGIIYNHPLIQGSPHWQRGKIARALACKLAIAARADYVGDYIADELLEKLNKRVEEIRRKYPKPPKKKKKEKPKAKKKEKKGKKEKSKKKKDKKKDKKGKKERKVIGKTKSRK.

One can recognise a Nop domain in the interval 246 to 360 (EAPNITKLAG…LNKRVEEIRR (115 aa)). Residues 358 to 414 (IRRKYPKPPKKKKKEKPKAKKKEKKGKKEKSKKKKDKKKDKKGKKERKVIGKTKSRK) are disordered. Basic residues predominate over residues 361–414 (KYPKPPKKKKKEKPKAKKKEKKGKKEKSKKKKDKKKDKKGKKERKVIGKTKSRK).

Belongs to the NOP5/NOP56 family.

This is an uncharacterized protein from Methanocaldococcus jannaschii (strain ATCC 43067 / DSM 2661 / JAL-1 / JCM 10045 / NBRC 100440) (Methanococcus jannaschii).